The primary structure comprises 203 residues: HTH-type transcriptional regulator BetI (203 aa).

The HTH tetR-type domain maps to 8–68 (PVRRKALVDA…ATIRSLLGKL (61 aa)). The segment at residues 31–50 (TMSEIARTAGVSPALAHHYF) is a DNA-binding region (H-T-H motif).

It functions in the pathway amine and polyamine biosynthesis; betaine biosynthesis via choline pathway [regulation]. In terms of biological role, repressor involved in the biosynthesis of the osmoprotectant glycine betaine. It represses transcription of the choline transporter BetT and the genes of BetAB involved in the synthesis of glycine betaine. In Rhizobium meliloti (strain 1021) (Ensifer meliloti), this protein is HTH-type transcriptional regulator BetI.